We begin with the raw amino-acid sequence, 357 residues long: Hyaluronidase (357 aa).

An N-terminal signal peptide occupies residues 1–26; the sequence is MLLVTLFLFFLQALVNGDSCGSNCEK. 2 disulfide bridges follow: Cys45–Cys334 and Cys211–Cys223. 2 N-linked (GlcNAc...) asparagine glycosylation sites follow: Asn105 and Asn125. The Proton donor role is filled by Glu135. Residue Asn153 is glycosylated (N-linked (GlcNAc...) asparagine). N-linked (GlcNAc...) asparagine glycosylation occurs at Asn351.

This sequence belongs to the glycosyl hydrolase 56 family.

It is found in the secreted. It carries out the reaction Random hydrolysis of (1-&gt;4)-linkages between N-acetyl-beta-D-glucosamine and D-glucuronate residues in hyaluronate.. Hydrolyzes high molecular weight hyaluronic acid to produce small oligosaccharides. The chain is Hyaluronidase from Vespa magnifica (Hornet).